The chain runs to 132 residues: Small ribosomal subunit protein uS8 (132 aa).

The protein belongs to the universal ribosomal protein uS8 family. As to quaternary structure, part of the 30S ribosomal subunit. Contacts proteins S5 and S12.

Its function is as follows. One of the primary rRNA binding proteins, it binds directly to 16S rRNA central domain where it helps coordinate assembly of the platform of the 30S subunit. This chain is Small ribosomal subunit protein uS8, found in Streptococcus thermophilus (strain CNRZ 1066).